The chain runs to 947 residues: MLIRNLLCLLERVAAEPMSGEIICYSPHANAGYCSWSYTQLLVEAQRASHALESTHGKALVPGSRVLLHFTSHWDNIVWFWAVLLAGCIPVMSTALPTNGFLRKAHLEHLARTLINPLCLTRAVSVSEFADQDAVNPIVIESLDLAKPLGPSNNPSGSRKHTRGLEDTAAVLLTSGSTGRCKAVCLSHGQVLAAARGKLDALPPADESFLNWISLDHVAALVEVHIQAMLARKTQIHVPAPYLVSQPTKLLDLVHAHRVSRTFAPNFFLARLREALKNCPTTTANENLNGATSIRADQPSRWDLSCLRCINSGGEPNKTRTCQEVSEALAQYGAPGNIIVPGFGMTETCAGAIFNQHCPRYDLDHQLEFASVGRCMPGISIRISAGLNSNQPVPIGQPGFFQVAGPVVFKEYFNNKHATTEAFTSDGWFKTGDLALIDERGHLSLTGRSKETMIVNGVNYDPQSVEDAVNEASIPGLVPSFSCCFSCLPAGSETEEICLVYLPTYQKDDVAARVETTASISRVVMMAVGVLPQVIPLDEAHLQKSSLGKLSRARVKAAYLRGEYNAQRNLNHDLIRAFRRETRTAPENEFERDLLAAVIDSLGPLDEDEFGVDTPILDLGITSIELIKLKKDLEASLRLHRDIPLITLLTHPTVRDLGTALRKLQGTQVYDPVIKLQAEGTKTPLWLVHPGVGEVLVFLNLAKFIKDRPVYAFRARGLGGDDERPFTNISEAVKTYYTALKHEQPNGPYAIAGYSYGSMLAFEISKLLEANNDRVSFIGSFNLPPHIKTRMRQLDFKECLLHLSYFLDLMTEARARELADELRDCSRDGALETVMQNASPTRLAELALSSSGLLRWANVAFALQSMAVDYEPTSSVSGLDCFYCIPLAVVAASKQQWLEDHLAKWNDFTRSPVRFHSVGGAHYTMLSPEHVFDFQKTLRRALENRGI.

Residues 25-413 form an adenylation (A) domain region; it reads YSPHANAGYC…AGPVVFKEYF (389 aa). Residues 585–665 enclose the Carrier domain; that stretch reads APENEFERDL…DLGTALRKLQ (81 aa). At Ser-623 the chain carries O-(pantetheine 4'-phosphoryl)serine. Residues 684–934 are thioesterase (TE) domain; sequence PLWLVHPGVG…MLSPEHVFDF (251 aa).

It belongs to the NRP synthetase family.

The enzyme catalyses 2 3-(4-hydroxyphenyl)pyruvate + 2 ATP = atromentin + 2 AMP + 2 diphosphate + H(+). It functions in the pathway secondary metabolite biosynthesis. Nonribosomal peptide synthetase that mediates the biosynthesis of usterphenyllins and uscandidusins, p-terphenyl derivatives. Within the pathway, ucdA condenses two 4-hydroxyphenylpyruvate (HPPA) units to produce atromentin. UcdA first activates HPPA through its A domain to AMP-HPPA. The HPPA unit is then loaded to the T domain and eventually transferred to the TE domain. Another HPPA unit is then loaded onto the T domain. The TE domain then catalyzes the condensation of the two HPPA units and the release of atromentin via cyclization. The pathway begin with the biosynthesis of 4-hydroxyphenylpyruvate (HPPA) from L-tyrosine, possibly by the aminotransferase ucdG. The nonribosomal peptide synthetase ucdA then condenses two HPPA units to produce atromentin. The key step in this pathway is the reduction and dehydration of atromentin to form a terphenyl triol intermediate, performed by the NAD-dependent dehydrogenase ucdB. Further O-methylation by the methyltransferase ucdC forms terphenyllin carrying two methoxy moieties at C-9 and C-12, and subsequent dihydroxylation at C-3 of ring A and C-15 of ring C by the flavin-dependent oxygenase ucdD leads to 3,15-dihydroxyterphenyllin. Prenylation by ucdE at position C-5 of ring A forms usterphenyllin B, and is followed by a second prenylation at position C-14 of ring C to form usterphenyllin A. The following furan ring formation that leads to uscandidusins A and B was proven to be an unexpected spontaneous non-enzymatic reaction. This Aspergillus ustus protein is Nonribosomal peptide synthetase ucdA.